A 594-amino-acid chain; its full sequence is Zinc finger protein 703 (594 aa).

The span at 1-14 shows a compositional bias: polar residues; the sequence is MSDSPAGSNPRTPE. 3 disordered regions span residues 1-37, 100-298, and 345-370; these read MSDS…VPAV, TCSQ…GHVA, and LVGG…LTGA. At Ser-2 the chain carries N-acetylserine. Gly residues predominate over residues 17 to 30; that stretch reads GSGGGSSSGGGGGK. Low complexity-rich tracts occupy residues 134–145, 177–191, and 212–225; these read RSAPGAASAAAA, GSSS…SSSS, and GASV…SSPG. Basic and acidic residues predominate over residues 246-256; it reads ELDKKEQEAKP. Ser-257 bears the Phosphoserine mark. Residues 345–356 show a composition bias toward gly residues; the sequence is LVGGQLSGGLGL. The segment at 460-488 adopts a C2H2-type zinc-finger fold; it reads HSCNWVAASGPCDKRFATSEELLSHLRTH. Residue Arg-584 is modified to Omega-N-methylarginine.

It belongs to the Elbow/Noc family. As to quaternary structure, interacts with DCAF7 and PHB2. Interacts with TLE4; increases transcriptional repression. As to expression, expressed in mammary epithelium.

Its subcellular location is the nucleus. It localises to the cytoplasm. Transcriptional corepressor which does not bind directly to DNA and may regulate transcription through recruitment of histone deacetylases to gene promoters. Regulates cell adhesion, migration and proliferation. May be required for segmental gene expression during hindbrain development. This chain is Zinc finger protein 703 (Znf703), found in Mus musculus (Mouse).